The chain runs to 51 residues: Sperm protamine P1 (51 aa).

Cystine bridges form between Cys-7-Cys-15 and Cys-40-Cys-48.

This sequence belongs to the protamine P1 family. In terms of assembly, cross-linked by interchain disulfide bonds around the DNA-helix. As to expression, testis.

It localises to the nucleus. The protein localises to the chromosome. Protamines substitute for histones in the chromatin of sperm during the haploid phase of spermatogenesis. They compact sperm DNA into a highly condensed, stable and inactive complex. The chain is Sperm protamine P1 (PRM1) from Capra hircus (Goat).